The primary structure comprises 279 residues: Nitrogenase vanadium-iron protein alpha chain (279 aa).

Positions 5, 31, and 94 each coordinate [8Fe-7S] cluster. A [7Fe-V-9S-C-homocitryl] cluster-binding site is contributed by Cys213.

The protein belongs to the NifD/NifK/NifE/NifN family. Hexamer of two alpha, two beta, and two delta chains. It depends on [8Fe-7S] cluster as a cofactor. Requires [7Fe-V-9S-C-homocitryl] cluster as cofactor.

It catalyses the reaction N2 + 8 reduced [2Fe-2S]-[ferredoxin] + 16 ATP + 16 H2O = H2 + 8 oxidized [2Fe-2S]-[ferredoxin] + 2 NH4(+) + 16 ADP + 16 phosphate + 6 H(+). This vanadium-iron protein is part of the nitrogenase complex that catalyzes the key enzymatic reactions in nitrogen fixation. In Azotobacter salinestris, this protein is Nitrogenase vanadium-iron protein alpha chain (vnfD).